Reading from the N-terminus, the 570-residue chain is Vacuolar protein sorting-associated protein 45 (570 aa).

Residues serine 307 and serine 441 each carry the phosphoserine modification.

The protein belongs to the STXBP/unc-18/SEC1 family. As to quaternary structure, interacts with STX6. Interacts with ZFYVE20. In terms of tissue distribution, ubiquitous. Expression was highest in testis, heart and brain, intermediate in kidney, spleen, prostate, ovary, small intestine and thymus and low in lung, skeletal muscle, placenta, colon, pancreas, peripheral blood leukocytes and liver.

The protein localises to the golgi apparatus membrane. The protein resides in the endosome membrane. May play a role in vesicle-mediated protein trafficking from the Golgi stack through the trans-Golgi network. The chain is Vacuolar protein sorting-associated protein 45 (VPS45) from Homo sapiens (Human).